We begin with the raw amino-acid sequence, 221 residues long: Imidazoleglycerol-phosphate dehydratase (221 aa).

This sequence belongs to the imidazoleglycerol-phosphate dehydratase family.

It carries out the reaction D-erythro-1-(imidazol-4-yl)glycerol 3-phosphate = 3-(imidazol-4-yl)-2-oxopropyl phosphate + H2O. It functions in the pathway amino-acid biosynthesis; L-histidine biosynthesis; L-histidine from 5-phospho-alpha-D-ribose 1-diphosphate: step 6/9. This Kluyveromyces lactis (strain ATCC 8585 / CBS 2359 / DSM 70799 / NBRC 1267 / NRRL Y-1140 / WM37) (Yeast) protein is Imidazoleglycerol-phosphate dehydratase (HIS3).